The sequence spans 256 residues: DNA repair protein RecO (256 aa).

Belongs to the RecO family.

Functionally, involved in DNA repair and RecF pathway recombination. The chain is DNA repair protein RecO from Clostridium novyi (strain NT).